Reading from the N-terminus, the 374-residue chain is Secondary metabolism regulator laeA (374 aa).

The tract at residues 1 to 75 (MFEMGPVGTR…NRNGSPSMSP (75 aa)) is disordered. The span at 23 to 40 (SYHSPTSSDRGRSRQNSD) shows a compositional bias: polar residues. S-methylmethionine is present on Met-207.

It belongs to the methyltransferase superfamily. LaeA methyltransferase family. Component of the heterotrimeric velvet complex composed of laeA, veA and velB; VeA acting as a bridging protein between laeA and velB. In terms of processing, self-methylates at Met-207.

The protein resides in the nucleus. It catalyses the reaction L-methionyl-[protein] + S-adenosyl-L-methionine = S-methyl-L-methionyl-[protein] + S-adenosyl-L-homocysteine. Methyltransferase that performs automethylation at Met-207. No other methyl-accepting substrate has been identified yet. Component of the velvet transcription factor complex that acts as a global regulator for secondary metabolite gene expression. Controls the expression of the sterigmatocystin, penicillin, and lovastatin gene clusters. Controls light-dependent formation of the velB-vosA complex, veA protein modification, and is required for light-mediated inhibition of sexual development. Within the velvet complex, controls light-dependent secondary metabolism. Involved in the defense response against Drosophila melanogaster larval grazing. The protein is Secondary metabolism regulator laeA of Emericella nidulans (Aspergillus nidulans).